The following is a 350-amino-acid chain: ATPase GET3 (350 aa).

Residue 26-33 (KGGVGKTT) participates in ATP binding. D57 is an active-site residue. ATP-binding residues include E241 and N268. The Zn(2+) site is built by C281 and C284.

This sequence belongs to the arsA ATPase family. Homodimer. Component of the Golgi to ER traffic (GET) complex, which is composed of GET1, GET2 and GET3. Within the complex, GET1 and GET2 form a heterotetramer which is stabilized by phosphatidylinositol binding and which binds to the GET3 homodimer. Interacts with the chloride channel protein GEF1.

The protein localises to the cytoplasm. It localises to the endoplasmic reticulum. The protein resides in the golgi apparatus. In terms of biological role, ATPase required for the post-translational delivery of tail-anchored (TA) proteins to the endoplasmic reticulum. Recognizes and selectively binds the transmembrane domain of TA proteins in the cytosol. This complex then targets to the endoplasmic reticulum by membrane-bound receptors GET1 and GET2, where the tail-anchored protein is released for insertion. This process is regulated by ATP binding and hydrolysis. ATP binding drives the homodimer towards the closed dimer state, facilitating recognition of newly synthesized TA membrane proteins. ATP hydrolysis is required for insertion. Subsequently, the homodimer reverts towards the open dimer state, lowering its affinity for the GET1-GET2 receptor, and returning it to the cytosol to initiate a new round of targeting. Cooperates with the HDEL receptor ERD2 to mediate the ATP-dependent retrieval of resident ER proteins that contain a C-terminal H-D-E-L retention signal from the Golgi to the ER. Involved in low-level resistance to the oxyanions arsenite and arsenate, and in heat tolerance. In Candida glabrata (strain ATCC 2001 / BCRC 20586 / JCM 3761 / NBRC 0622 / NRRL Y-65 / CBS 138) (Yeast), this protein is ATPase GET3.